Consider the following 182-residue polypeptide: Plasmolipin (182 aa).

A disordered region spans residues 1 to 20 (MAEFPSKVSTRTSSPAQGVG). The Cytoplasmic segment spans residues 1–35 (MAEFPSKVSTRTSSPAQGVGASVSAMRPDLGFVRS). The segment covering 7–16 (KVSTRTSSPA) has biased composition (polar residues). Serine 9 carries the phosphoserine modification. One can recognise an MARVEL domain in the interval 32 to 166 (FVRSALGVLA…SAFFSFQAWR (135 aa)). A helical transmembrane segment spans residues 36-56 (ALGVLALLQLVLGLLVWALIA). Topologically, residues 57–68 (DTPYHLYPAYGW) are extracellular. Residues 69 to 89 (VMFVAVFLWLVTIVFFIIYLF) traverse the membrane as a helical segment. Over 90-99 (QLHMKLYMVP) the chain is Cytoplasmic. The helical transmembrane segment at 100–120 (WPLVLLVFFVAATVLYITAFV) threads the bilayer. Residues 121 to 141 (ACAAAVDLTSLRGSRPYNQRS) lie on the Extracellular side of the membrane. The helical transmembrane segment at 142 to 162 (AASFFACLVMIAYGLSAFFSF) threads the bilayer. Over 163 to 182 (QAWRGVGSNAATSQMAGGYS) the chain is Cytoplasmic.

It belongs to the MAL family. In terms of assembly, forms oligomers. Post-translationally, phosphorylated. As to expression, detected to the sciatic nerve, brain and kidney. In the sciatic nerve, found in Schwann cells; in the brain, in developing oligodendrocytes, especially of the corpus callosum, of cortical white matter, in the optic nerve and in the stratum radiatum and stratum oriens of the hippocampus. In kidney, segregated to the apical surface of renal tubular epithelia.

The protein localises to the cell membrane. The protein resides in the myelin membrane. It is found in the apical cell membrane. In terms of biological role, main component of the myelin sheath that plays an important role in myelin membrane biogenesis and myelination. Plays an essential function in apical endocytosis. Regulates epithelial development through the regulation of apical endocytosis. Part of the intracellular machinery that mediates basolateral-to-apical transport of ICAM-1, an essential adhesion receptor in epithelial cells, from the subapical compartment in hepatic epithelial cells. This chain is Plasmolipin (Pllp), found in Rattus norvegicus (Rat).